The sequence spans 796 residues: Protein translocase subunit SecA 2 (796 aa).

ATP contacts are provided by residues glutamine 84, 102-106 (GEGKT), and aspartate 496.

The protein belongs to the SecA family. In terms of assembly, monomer and homodimer. Part of the essential Sec protein translocation apparatus which comprises SecA, SecYEG and auxiliary proteins SecDF. Other proteins may also be involved.

It localises to the cell membrane. The protein resides in the cytoplasm. It catalyses the reaction ATP + H2O + cellular proteinSide 1 = ADP + phosphate + cellular proteinSide 2.. Part of the Sec protein translocase complex. Interacts with the SecYEG preprotein conducting channel. Has a central role in coupling the hydrolysis of ATP to the transfer of proteins into and across the cell membrane, serving as an ATP-driven molecular motor driving the stepwise translocation of polypeptide chains across the membrane. In Staphylococcus aureus (strain MRSA252), this protein is Protein translocase subunit SecA 2.